Reading from the N-terminus, the 474-residue chain is MWTVQNRESLGLLSFPVMVAMVCCAHSSNEPSNMSYVKETVDRLLKGYDIRLRPDFGGPPVDVGMRIDVASIDMVSEVNMDYTLTMYFQQSWKDKRLSYSGIPLNLTLDNRVADQLWVPDTYFLNDKKSFVHGVTVKNRMIRLHPDGTVLYGLRITTTAACMMDLRRYPLDEQNCTLEIESYGYTTDDIEFYWNGGEGAVTGVNKIELPQFSIVDYKMVSKKVEFTTGAYPRLSLSFRLKRNIGYFILQTYMPSTLITILSWVSFWINYDASAARVALGITTVLTMTTISTHLRETLPKIPYVKAIDIYLMGCFVFVFLALLEYAFVNYIFFGKGPQKKGASKQDQSANEKNRLEMNKVQVDAHGNILLSTLEIRNETSGSEVLTGVSDPKATMYSYDSASIQYRKPLSSREGFGRGLDRHGVPGKGRIRRRASQLKVKIPDLTDVNSIDKWSRMFFPITFSLFNVVYWLYYVH.

Residues 1–25 form the signal peptide; it reads MWTVQNRESLGLLSFPVMVAMVCCA. Over 26–245 the chain is Extracellular; the sequence is HSSNEPSNMS…SFRLKRNIGY (220 aa). Asn33 and Asn105 each carry an N-linked (GlcNAc...) asparagine glycan. Tyr122 provides a ligand contact to histamine. Cys161 and Cys175 are disulfide-bonded. N-linked (GlcNAc...) asparagine glycosylation is present at Asn174. Histamine-binding positions include 181-182 and Thr227; that span reads SY. Residues Tyr182 and Thr227 each coordinate 4-aminobutanoate. Helical transmembrane passes span 246–267, 271–293, and 305–327; these read FILQ…SFWI, ASAA…STHL, and AIDI…YAFV. At 328 to 451 the chain is on the cytoplasmic side; that stretch reads NYIFFGKGPQ…DLTDVNSIDK (124 aa). The helical transmembrane segment at 452–473 threads the bilayer; it reads WSRMFFPITFSLFNVVYWLYYV.

Belongs to the ligand-gated ion channel (TC 1.A.9) family. Gamma-aminobutyric acid receptor (TC 1.A.9.5) subfamily. GABRB1 sub-subfamily. Heteropentamer, formed by a combination of alpha (GABRA1-6), beta (GABRB1-3), gamma (GABRG1-3), delta (GABRD), epsilon (GABRE), rho (GABRR1-3), pi (GABRP) and theta (GABRQ) chains, each subunit exhibiting distinct physiological and pharmacological properties. Binds UBQLN1.

The protein localises to the postsynaptic cell membrane. It localises to the cell membrane. The catalysed reaction is chloride(in) = chloride(out). Potentiated by histamine. In terms of biological role, beta subunit of the heteropentameric ligand-gated chloride channel gated by gamma-aminobutyric acid (GABA), a major inhibitory neurotransmitter in the brain. GABA-gated chloride channels, also named GABA(A) receptors (GABAAR), consist of five subunits arranged around a central pore and contain GABA active binding site(s) located at the alpha and beta subunit interface(s). When activated by GABA, GABAARs selectively allow the flow of chloride anions across the cell membrane down their electrochemical gradient. Chloride influx into the postsynaptic neuron following GABAAR opening decreases the neuron ability to generate a new action potential, thereby reducing nerve transmission. Beta-containing GABAARs can simultaneously bind GABA and histamine where histamine binds at the interface of two neighboring beta subunits, which may be involved in the regulation of sleep and wakefulness. The protein is Gamma-aminobutyric acid receptor subunit beta-1 of Mus musculus (Mouse).